We begin with the raw amino-acid sequence, 107 residues long: U1-lycotoxin-Ls1h (107 aa).

A signal peptide spans 1–20; it reads MMKVLVVVALLVTLISYSSS. The propeptide occupies 21 to 41; the sequence is EGIDDLEADELLSLMANEQTR. Disulfide bonds link C44-C59, C51-C68, and C70-C84.

The protein belongs to the neurotoxin 19 (CSTX) family. 04 (U1-Lctx) subfamily. In terms of tissue distribution, expressed by the venom gland.

The protein resides in the secreted. In Lycosa singoriensis (Wolf spider), this protein is U1-lycotoxin-Ls1h.